We begin with the raw amino-acid sequence, 294 residues long: Ribosomal RNA small subunit methyltransferase A (294 aa).

Positions 31, 33, 58, 79, 104, and 129 each coordinate S-adenosyl-L-methionine.

It belongs to the class I-like SAM-binding methyltransferase superfamily. rRNA adenine N(6)-methyltransferase family. RsmA subfamily.

It localises to the cytoplasm. The catalysed reaction is adenosine(1518)/adenosine(1519) in 16S rRNA + 4 S-adenosyl-L-methionine = N(6)-dimethyladenosine(1518)/N(6)-dimethyladenosine(1519) in 16S rRNA + 4 S-adenosyl-L-homocysteine + 4 H(+). Functionally, specifically dimethylates two adjacent adenosines (A1518 and A1519) in the loop of a conserved hairpin near the 3'-end of 16S rRNA in the 30S particle. May play a critical role in biogenesis of 30S subunits. The sequence is that of Ribosomal RNA small subunit methyltransferase A from Oceanobacillus iheyensis (strain DSM 14371 / CIP 107618 / JCM 11309 / KCTC 3954 / HTE831).